We begin with the raw amino-acid sequence, 493 residues long: Tripartite motif-containing protein 5 (493 aa).

A2 is subject to N-acetylalanine. The RING-type zinc-finger motif lies at 15–59 (CPICLELLTQPLSLDCGHSFCQACLTANHKKSMLDKGESSCPVCR). Residue S86 is modified to Phosphoserine. The segment at 90–132 (QKVDHCAHHGEKLLLFCQEDGKVICWLCERSQEHRGHHTFLTE) adopts a B box-type zinc-finger fold. Residues C95, H98, C117, and H123 each coordinate Zn(2+). The stretch at 131-240 (TEEVAREYQV…LISDLERRLQ (110 aa)) forms a coiled coil. Residues 185–198 (FEQLRDILDWEESN) form a required for interaction with GABARAP and for autophagy region. A B30.2/SPRY domain is found at 281-493 (LKGMLEVFRE…VPMTLCSPSS (213 aa)).

It belongs to the TRIM/RBCC family. Can form homodimers and homotrimers. In addition to lower-order dimerization, also exhibits a higher-order multimerization and both low- and high-order multimerizations are essential for its restriction activity. Interacts with BTBD1 and BTBD2. Interacts with PSMC4, PSMC5, PSMD7 and HSPA8/HSC70. Interacts (via B30.2/SPRY domain) with HSPA1A/B. Interacts with PSMC2, MAP3K7/TAK1, TAB2 and TAB3. Interacts with SQSTM1. Interacts with TRIM6 and TRIM34. Interacts with ULK1 (phosphorylated form), GABARAP, GABARAPL1, GABARAPL2, MAP1LC3A, MAP1LC3C and BECN1. In terms of processing, degraded in a proteasome-independent fashion in the absence of viral infection but in a proteasome-dependent fashion following exposure to restriction sensitive virus. Autoubiquitinated in a RING finger- and UBE2D2-dependent manner. Monoubiquitinated by TRIM21. Deubiquitinated by Yersinia YopJ. Ubiquitination may not lead to proteasomal degradation.

The protein resides in the cytoplasm. It localises to the nucleus. The catalysed reaction is S-ubiquitinyl-[E2 ubiquitin-conjugating enzyme]-L-cysteine + [acceptor protein]-L-lysine = [E2 ubiquitin-conjugating enzyme]-L-cysteine + N(6)-ubiquitinyl-[acceptor protein]-L-lysine.. It participates in protein modification; protein ubiquitination. In terms of biological role, capsid-specific restriction factor that prevents infection from non-host-adapted retroviruses. Blocks viral replication early in the life cycle, after viral entry but before reverse transcription. In addition to acting as a capsid-specific restriction factor, also acts as a pattern recognition receptor that activates innate immune signaling in response to the retroviral capsid lattice. Binding to the viral capsid triggers its E3 ubiquitin ligase activity, and in concert with the heterodimeric ubiquitin conjugating enzyme complex UBE2V1-UBE2N (also known as UBC13-UEV1A complex) generates 'Lys-63'-linked polyubiquitin chains, which in turn are catalysts in the autophosphorylation of the MAP3K7/TAK1 complex (includes TAK1, TAB2, and TAB3). Activation of the MAP3K7/TAK1 complex by autophosphorylation results in the induction and expression of NF-kappa-B and MAPK-responsive inflammatory genes, thereby leading to an innate immune response in the infected cell. Plays a role in regulating autophagy through activation of autophagy regulator BECN1 by causing its dissociation from its inhibitors BCL2 and TAB2. The sequence is that of Tripartite motif-containing protein 5 (TRIM5) from Pan troglodytes (Chimpanzee).